Here is a 105-residue protein sequence, read N- to C-terminus: Iron-sulfur cluster assembly protein CyaY (105 aa).

This sequence belongs to the frataxin family.

Involved in iron-sulfur (Fe-S) cluster assembly. May act as a regulator of Fe-S biogenesis. The chain is Iron-sulfur cluster assembly protein CyaY from Paraburkholderia xenovorans (strain LB400).